A 274-amino-acid chain; its full sequence is tRNA-cytidine(32) 2-sulfurtransferase (274 aa).

The PP-loop motif signature appears at 40–45 (SGGKDS). 3 residues coordinate [4Fe-4S] cluster: Cys115, Cys118, and Cys206.

This sequence belongs to the TtcA family. In terms of assembly, homodimer. The cofactor is Mg(2+). [4Fe-4S] cluster serves as cofactor.

It is found in the cytoplasm. It carries out the reaction cytidine(32) in tRNA + S-sulfanyl-L-cysteinyl-[cysteine desulfurase] + AH2 + ATP = 2-thiocytidine(32) in tRNA + L-cysteinyl-[cysteine desulfurase] + A + AMP + diphosphate + H(+). It participates in tRNA modification. Catalyzes the ATP-dependent 2-thiolation of cytidine in position 32 of tRNA, to form 2-thiocytidine (s(2)C32). The sulfur atoms are provided by the cysteine/cysteine desulfurase (IscS) system. In Pseudomonas syringae pv. syringae (strain B728a), this protein is tRNA-cytidine(32) 2-sulfurtransferase.